We begin with the raw amino-acid sequence, 1302 residues long: MAGVATPCANGCGPGAPSEAEVLHLCRSLEVGTVMTLFYSKKSQRPERKTFQVKLETRQITWSRGADKIEGSIDIREIKEIRPGKTSRDFDRYQEDPAFRPDQSHCFVILYGMEFRLKTLSLQATSEDEVNMWIKGLTWLMEDTLQAATPLQIERWLRKQFYSVDRNREDRISAKDLKNMLSQVNYRVPNMRFLRERLTDLEQRSGDITYGQFAQLYRSLMYSAQKTMDLPFLETNALRTGERPEHCQVSLSEFQQFLLEYQGELWAVDRLQVQEFMLSFLRDPLREIEEPYFFLDELVTFLFSKENSVWNSQLDAVCPDTMNNPLSHYWISSSHNTYLTGDQFSSESSLEAYARCLRMGCRCIELDCWDGPDGMPVIYHGHTLTTKIKFSDVLHTIKEHAFVASEYPVILSIEDHCSIAQQRNMAQHFRKVLGDTLLTKPVDIAADGLPSPNQLRRKILIKHKKLAEGSAYEEVPTSVMYSENDISNSIKNGILYLEDPVNHEWYPHYFVLTSSKIYYSEETSSDQGNEDEEEPKEASSSTELHSSEKWFHGKLGAGRDGRHIAERLLTEYCIETGAPDGSFLVRESETFVGDYTLSFWRNGKVQHCRIHSRQDAGTPKFFLTDNLVFDSLYDLITHYQQVPLRCNEFEMRLSEPVPQTNAHESKEWYHASLTRAQAEHMLMRVPRDGAFLVRKRNEPNSYAISFRAEGKIKHCRVQQEGQTVMLGNSEFDSLVDLISYYEKHPLYRKMKLRYPINEEALEKIGTAEPDYGALYEGRNPGFYVEANPMPTFKCAVKALFDYKAQREDELTFTKSAIIQNVEKQDGGWWRGDYGGKKQLWFPSNYVEEMINPAVLEPEREHLDENSPLGDLLRGVLDVPACQIAIRPEGKNNRLFVFSISMPSVAQWSLDVAADSQEELQDWVKKIREVAQTADARLTEGKMMERRKKIALELSELVVYCRPVPFDEEKIGTERACYRDMSSFPETKAEKYVNKAKGKKFLQYNRLQLSRIYPKGQRLDSSNYDPLPMWICGSQLVALNFQTPDKPMQMNQALFMAGGHCGYVLQPSTMRDEAFDPFDKSSLRGLEPCVICIEVLGARHLPKNGRGIVCPFVEIEVAGAEYDSTKQKTEFVVDNGLNPVWPAKPFHFQISNPEFAFLRFVVYEEDMFSDQNFLAQATFPVKGLKTGYRAVPLKNNYSEDLELASLLIKIDIFPAKENGDLSPFSGISLRERASDASSQLFHVRAREGSFEARYQQPFEDFRISQEHLADHFDSRERSTSDGPSSATNLIEDPLHDKLWKCSL.

An N-acetylalanine modification is found at Ala2. The PH 1 domain occupies 27–142; the sequence is RSLEVGTVMT…WIKGLTWLME (116 aa). Positions 152–187 constitute an EF-hand domain; it reads QIERWLRKQFYSVDRNREDRISAKDLKNMLSQVNYR. Residues Asp165, Asn167, Glu169, Arg171, and Asp176 each coordinate Ca(2+). Residues 320–464 form the PI-PLC X-box domain; it reads DTMNNPLSHY…LRRKILIKHK (145 aa). Residues His335 and His380 contribute to the active site. Positions 489-523 constitute a PH 2; first part domain; the sequence is SIKNGILYLEDPVNHEWYPHYFVLTSSKIYYSEET. Tyr506 is subject to Phosphotyrosine. A disordered region spans residues 522 to 545; the sequence is ETSSDQGNEDEEEPKEASSSTELH. 2 consecutive SH2 domains span residues 550 to 657 and 668 to 756; these read WFHG…SEPV and WYHA…RYPI. Position 771 is a phosphotyrosine; by SYK (Tyr771). Tyr775 is modified (phosphotyrosine). Tyr783 carries the phosphotyrosine; by ITK, SYK and TXK modification. The 61-residue stretch at 791–851 folds into the SH3 domain; the sequence is TFKCAVKALF…PSNYVEEMIN (61 aa). One can recognise a PH 2; second part domain in the interval 895–931; the sequence is FVFSISMPSVAQWSLDVAADSQEELQDWVKKIREVAQ. One can recognise a PI-PLC Y-box domain in the interval 953-1070; the sequence is LSELVVYCRP…GYVLQPSTMR (118 aa). Tyr977 bears the Phosphotyrosine mark. One can recognise a C2 domain in the interval 1071-1194; that stretch reads DEAFDPFDKS…TGYRAVPLKN (124 aa). Residues Ser1221, Ser1227, Ser1233, and Ser1248 each carry the phosphoserine modification. Position 1253 is a phosphotyrosine (Tyr1253). Ser1263 carries the phosphoserine modification.

In terms of assembly, interacts (via SH2 domain) with FGFR1, FGFR2, FGFR3 and FGFR4 (phosphorylated). Interacts with RALGPS1. Interacts (via SH2 domains) with VIL1 (phosphorylated at C-terminus tyrosine phosphorylation sites). Interacts (via SH2 domain) with RET. Interacts with AGAP2 via its SH3 domain. Interacts with LAT (phosphorylated) upon TCR activation. Interacts (via SH3 domain) with the Pro-rich domain of TNK1. Associates with BLNK, VAV1, GRB2 and NCK1 in a B-cell antigen receptor-dependent fashion. Interacts with CBLB in activated T-cells; which inhibits phosphorylation. Interacts with SHB. Interacts (via SH3 domain) with the Arg/Gly-rich-flanked Pro-rich domains of KHDRBS1/SAM68. This interaction is selectively regulated by arginine methylation of KHDRBS1/SAM68. Interacts with INPP5D/SHIP1, THEMIS and CLNK. Interacts with FLT4 and KIT. Interacts with AXL. Interacts with SYK; activates PLCG1. Interacts with FLT1 (tyrosine-phosphorylated). Interacts (via SH2 domain) with PDGFRA and PDGFRB (tyrosine phosphorylated). Interacts with PIP5K1C. Interacts with NTRK1 and NTRK2 (phosphorylated upon ligand-binding). Interacts with TESPA1. Interacts with GRB2, LAT and THEMIS upon TCR activation in thymocytes; the association is weaker in the absence of TESPA1. Interacts (via C-terminal proline-rich domain (PRD)) with PLCG1 (via SH3 domain); this interaction leads to guanine nucleotide exchange from PlCG1 to DNM1 and enhances DNM1-dependent endocytosis. It depends on Ca(2+) as a cofactor. Post-translationally, tyrosine phosphorylated in response to signaling via activated FLT3, KIT and PDGFRA. Tyrosine phosphorylated by activated FGFR1, FGFR2, FGFR3 and FGFR4. Tyrosine phosphorylated by activated FLT1 and KDR. Tyrosine phosphorylated by activated PDGFRB. The receptor-mediated activation of PLCG1 involves its phosphorylation by tyrosine kinases in response to ligation of a variety of growth factor receptors and immune system receptors. For instance, SYK phosphorylates and activates PLCG1 in response to ligation of the B-cell receptor. Phosphorylated by ITK and TXK on Tyr-783 upon TCR activation in T-cells. May be dephosphorylated by PTPRJ. In terms of processing, ubiquitinated by CBLB in activated T-cells.

The protein resides in the cell projection. It is found in the lamellipodium. Its subcellular location is the ruffle. It catalyses the reaction a 1,2-diacyl-sn-glycero-3-phospho-(1D-myo-inositol-4,5-bisphosphate) + H2O = 1D-myo-inositol 1,4,5-trisphosphate + a 1,2-diacyl-sn-glycerol + H(+). The enzyme catalyses a 1,2-diacyl-sn-glycero-3-phospho-(1D-myo-inositol) + H2O = 1D-myo-inositol 1-phosphate + a 1,2-diacyl-sn-glycerol + H(+). With respect to regulation, activated by phosphorylation on tyrosine residues. Its function is as follows. Mediates the production of the second messenger molecules diacylglycerol (DAG) and inositol 1,4,5-trisphosphate (IP3). Plays an important role in the regulation of intracellular signaling cascades. Becomes activated in response to ligand-mediated activation of receptor-type tyrosine kinases, such as PDGFRA, PDGFRB, EGFR, FGFR1, FGFR2, FGFR3 and FGFR4. Plays a role in actin reorganization and cell migration. Guanine nucleotide exchange factor that binds the GTPase DNM1 and catalyzes the dissociation of GDP, allowing a GTP molecule to bind in its place, therefore enhancing DNM1-dependent endocytosis. This chain is 1-phosphatidylinositol 4,5-bisphosphate phosphodiesterase gamma-1, found in Mus musculus (Mouse).